A 612-amino-acid polypeptide reads, in one-letter code: T-cell immunomodulatory protein (612 aa).

An N-terminal signal peptide occupies residues 1 to 33; the sequence is MAAAGRLPSSWALFSPLLAGLALLGVGPVPARA. N-linked (GlcNAc...) asparagine glycosylation is found at N36, N95, N139, N146, N151, N176, N188, N226, and N243. An FG-GAP; atypical repeat occupies 258 to 293; that stretch reads VVGQSAFADFDGDGHMDHLLPGCEDKNCQKSTIYLV. N-linked (GlcNAc...) asparagine glycosylation is found at N353, N371, and N482. Residues 567-587 form a helical membrane-spanning segment; it reads VLLTAIALIGVCVFILAIIGI.

Belongs to the TIP family. In terms of assembly, interacts with RUVBL1, RUVBL2 and alpha-tubulin. As to expression, ubiquitously expressed.

It localises to the secreted. Its subcellular location is the membrane. Its function is as follows. Modulator of T-cell function. Has a protective effect in graft versus host disease model. The sequence is that of T-cell immunomodulatory protein from Homo sapiens (Human).